The chain runs to 250 residues: Ribosomal RNA small subunit methyltransferase J (250 aa).

Residues 101 to 102 (RD), 117 to 118 (ER), 153 to 154 (SS), and D171 each bind S-adenosyl-L-methionine.

It belongs to the methyltransferase superfamily. RsmJ family.

It is found in the cytoplasm. The catalysed reaction is guanosine(1516) in 16S rRNA + S-adenosyl-L-methionine = N(2)-methylguanosine(1516) in 16S rRNA + S-adenosyl-L-homocysteine + H(+). In terms of biological role, specifically methylates the guanosine in position 1516 of 16S rRNA. The polypeptide is Ribosomal RNA small subunit methyltransferase J (Shigella dysenteriae serotype 1 (strain Sd197)).